The sequence spans 158 residues: 2-C-methyl-D-erythritol 2,4-cyclodiphosphate synthase (158 aa).

2 residues coordinate a divalent metal cation: aspartate 9 and histidine 11. Residues 9–11 and 35–36 contribute to the 4-CDP-2-C-methyl-D-erythritol 2-phosphate site; these read DVH and HS. Histidine 43 contributes to the a divalent metal cation binding site. 4-CDP-2-C-methyl-D-erythritol 2-phosphate-binding positions include 57-59, 62-66, 133-136, phenylalanine 140, and arginine 143; these read DIG, FPDTD, and TTTE.

Belongs to the IspF family. Homotrimer. It depends on a divalent metal cation as a cofactor.

The catalysed reaction is 4-CDP-2-C-methyl-D-erythritol 2-phosphate = 2-C-methyl-D-erythritol 2,4-cyclic diphosphate + CMP. The protein operates within isoprenoid biosynthesis; isopentenyl diphosphate biosynthesis via DXP pathway; isopentenyl diphosphate from 1-deoxy-D-xylulose 5-phosphate: step 4/6. Involved in the biosynthesis of isopentenyl diphosphate (IPP) and dimethylallyl diphosphate (DMAPP), two major building blocks of isoprenoid compounds. Catalyzes the conversion of 4-diphosphocytidyl-2-C-methyl-D-erythritol 2-phosphate (CDP-ME2P) to 2-C-methyl-D-erythritol 2,4-cyclodiphosphate (ME-CPP) with a corresponding release of cytidine 5-monophosphate (CMP). The sequence is that of 2-C-methyl-D-erythritol 2,4-cyclodiphosphate synthase from Geobacillus kaustophilus (strain HTA426).